Here is a 346-residue protein sequence, read N- to C-terminus: Holliday junction branch migration complex subunit RuvB (346 aa).

The interval Met1–Tyr182 is large ATPase domain (RuvB-L). Residues Ile21, Arg22, Gly63, Lys66, Thr67, Thr68, Glu129–Phe131, Arg172, Tyr182, and Arg219 contribute to the ATP site. Position 67 (Thr67) interacts with Mg(2+). A small ATPAse domain (RuvB-S) region spans residues Ser183–Asp253. The head domain (RuvB-H) stretch occupies residues Glu256 to Ser346. Arg311 and Arg316 together coordinate DNA.

The protein belongs to the RuvB family. As to quaternary structure, homohexamer. Forms an RuvA(8)-RuvB(12)-Holliday junction (HJ) complex. HJ DNA is sandwiched between 2 RuvA tetramers; dsDNA enters through RuvA and exits via RuvB. An RuvB hexamer assembles on each DNA strand where it exits the tetramer. Each RuvB hexamer is contacted by two RuvA subunits (via domain III) on 2 adjacent RuvB subunits; this complex drives branch migration. In the full resolvosome a probable DNA-RuvA(4)-RuvB(12)-RuvC(2) complex forms which resolves the HJ.

Its subcellular location is the cytoplasm. The enzyme catalyses ATP + H2O = ADP + phosphate + H(+). The RuvA-RuvB-RuvC complex processes Holliday junction (HJ) DNA during genetic recombination and DNA repair, while the RuvA-RuvB complex plays an important role in the rescue of blocked DNA replication forks via replication fork reversal (RFR). RuvA specifically binds to HJ cruciform DNA, conferring on it an open structure. The RuvB hexamer acts as an ATP-dependent pump, pulling dsDNA into and through the RuvAB complex. RuvB forms 2 homohexamers on either side of HJ DNA bound by 1 or 2 RuvA tetramers; 4 subunits per hexamer contact DNA at a time. Coordinated motions by a converter formed by DNA-disengaged RuvB subunits stimulates ATP hydrolysis and nucleotide exchange. Immobilization of the converter enables RuvB to convert the ATP-contained energy into a lever motion, pulling 2 nucleotides of DNA out of the RuvA tetramer per ATP hydrolyzed, thus driving DNA branch migration. The RuvB motors rotate together with the DNA substrate, which together with the progressing nucleotide cycle form the mechanistic basis for DNA recombination by continuous HJ branch migration. Branch migration allows RuvC to scan DNA until it finds its consensus sequence, where it cleaves and resolves cruciform DNA. In Chlorobium phaeovibrioides (strain DSM 265 / 1930) (Prosthecochloris vibrioformis (strain DSM 265)), this protein is Holliday junction branch migration complex subunit RuvB.